The following is a 28-amino-acid chain: Ranatuerin-2SEb (28 aa).

The cysteines at positions 23 and 28 are disulfide-linked.

Expressed by the skin glands.

The protein resides in the secreted. In terms of biological role, mast cell degranulating peptide. Causes histamine release from rat peritoneal mast cells in vitro. Has antibacterial activity against the Gram-negative bacterium E.coli K12 and Gram-positive bacterium M.luteus NCT C2665. This chain is Ranatuerin-2SEb, found in Lithobates sevosus (Dusky gopher frog).